Here is a 355-residue protein sequence, read N- to C-terminus: tRNA-specific 2-thiouridylase MnmA (355 aa).

ATP-binding positions include 6–13 (LLSGGVDS) and Leu-33. The active-site Nucleophile is Cys-100. An intrachain disulfide couples Cys-100 to Cys-195. ATP is bound at residue Gly-123. The interval 145-147 (KDQ) is interaction with tRNA. Catalysis depends on Cys-195, which acts as the Cysteine persulfide intermediate.

This sequence belongs to the MnmA/TRMU family.

The protein localises to the cytoplasm. The catalysed reaction is S-sulfanyl-L-cysteinyl-[protein] + uridine(34) in tRNA + AH2 + ATP = 2-thiouridine(34) in tRNA + L-cysteinyl-[protein] + A + AMP + diphosphate + H(+). Catalyzes the 2-thiolation of uridine at the wobble position (U34) of tRNA, leading to the formation of s(2)U34. The polypeptide is tRNA-specific 2-thiouridylase MnmA (Borreliella burgdorferi (strain ATCC 35210 / DSM 4680 / CIP 102532 / B31) (Borrelia burgdorferi)).